The primary structure comprises 294 residues: uncharacterized protein (294 aa).

The disordered stretch occupies residues 181-204 (DEPFPTTKNHNNDKRETNDKDDQQ). A compositionally biased stretch (basic and acidic residues) spans 190-204 (HNNDKRETNDKDDQQ).

It belongs to the IIV-6 391R family.

This is an uncharacterized protein from Acheta domesticus (House cricket).